We begin with the raw amino-acid sequence, 313 residues long: Cytochrome f (313 aa).

A signal peptide spans 1 to 31 (MQNMFSFLSNKKIIALFLIIGTIFMPLSSEA). Residues tyrosine 32, cysteine 52, cysteine 55, and histidine 56 each contribute to the heme site. The helical transmembrane segment at 279–298 (IKWLIAFLILSTLGQVFLVL) threads the bilayer.

The protein belongs to the cytochrome f family. As to quaternary structure, the 4 large subunits of the cytochrome b6-f complex are cytochrome b6, subunit IV (17 kDa polypeptide, petD), cytochrome f and the Rieske protein, while the 4 small subunits are PetG, PetL, PetM and PetN. The complex functions as a dimer. The cofactor is heme.

The protein resides in the plastid. It is found in the chloroplast thylakoid membrane. Component of the cytochrome b6-f complex, which mediates electron transfer between photosystem II (PSII) and photosystem I (PSI), cyclic electron flow around PSI, and state transitions. The protein is Cytochrome f (petA) of Mesostigma viride (Green alga).